The chain runs to 734 residues: Terpene cyclase/mutase ntnI (734 aa).

Residues M1–A12 are compositionally biased toward polar residues. Residues M1–T26 are disordered. Residues L16–T26 show a composition bias toward basic and acidic residues. 4 PFTB repeats span residues A130 to G172, L493 to T534, R570 to G610, and S619 to H668.

Belongs to the terpene cyclase/mutase family.

Its pathway is secondary metabolite biosynthesis; terpenoid biosynthesis. Its function is as follows. Terpene cyclase/mutase; part of the gene cluster that mediates the biosynthesis of the meroterpenoids nectripenoids A and B, as well as cochliquninone D and isocochliquninone E. The pathway probably begins with the HR-PKS ntnH that catalyzes two chain-extension steps to form a reduced triketide, which then primes the SAT domain in the NR-PKS ntnG to initiate three more cycles of extension to give a linear hexaketide corresponding to the polyketide part of nectripenoids. The FAD-dependent monooxygenase ntnJ then performs an oxidative decarboxylation at C11 of the ntnH/ntnG product, via an electrophilic aromatic hydroxylation with concomitant ipso-decarboxylation. The membrane-bound polyprenyl transferase ntnF then introduces a farnesyl group before the FAD-dependent monooxygenase ntnK functions as the first epoxidase on terminal C12'-C13' olefin, followed by a second epoxidation on C7'-C8' catalyzed by ntnA. The terpene cyclase/mutase ntnI then initiates the sequential tricyclic ring formation through protonation of the terminal epoxide and catalyzes the regioselective and stereoselective 6/6/6-tricyclic ring formation. The cytochrome P450 monooxygenase ntnM may then hydroxylate C1'. This is Terpene cyclase/mutase ntnI from Nectria sp.